The chain runs to 532 residues: MSSEKFTSISPAEFFKRNPELAGFSNPARALYQTVRELVENALDATDVHNILPSIKIIIELVDPQKQIYKVNVEDNGIGIPPHIVPNAFGKVLYSSKYVLRQTRGMYGLGVKAAVLYSQMYQERPVEVVTSPINSKRIYFFKLKIDVVKNEPIILQKTSVVNEKNWHGTSVTLYLYADWQRAKQKIYEYVKKTYIISPYAEFFFKDPDNNVIYYKRLTDKIPEPPKEVKPHPYGVDIELIKFMIVKKDKPVPVRDFLINEFQSIGDVTADKILEMAKLPKDKKTTELTDEEISRLVEVMKKFDDFRPPSAEALSVIGEDLIKLGLKSIFNPEFAEAITRKPKAYQGHPFIVEAGIAYGGAIQPSPEPIVLRYANKIPLIYDEKSDVIWKVVTEEMDWKRYGIEEEQPPLVVMVHLCSTKVPYRSAGKESIADVEEIEKEIKLALMDVARKLKKYITEKRKEEEAKKRLITYLKYIPEVSRGLALFLVGGDKQKIGDAYSDLREKLLKIALNKLEVNDKKLEEEIRNYKVEEL.

Residues Asn41, Asp75, 96-97 (SK), 105-112 (GMYGLGVK), and Lys427 contribute to the ATP site.

It belongs to the TOP6B family. In terms of assembly, homodimer. Heterotetramer of two Top6A and two Top6B chains.

It catalyses the reaction ATP-dependent breakage, passage and rejoining of double-stranded DNA.. Its function is as follows. Relaxes both positive and negative superturns and exhibits a strong decatenase activity. The protein is Type 2 DNA topoisomerase 6 subunit B of Sulfurisphaera tokodaii (strain DSM 16993 / JCM 10545 / NBRC 100140 / 7) (Sulfolobus tokodaii).